We begin with the raw amino-acid sequence, 196 residues long: Chromophore lyase CpcT/CpeT (196 aa).

Belongs to the CpcT/CpeT biliprotein lyase family.

Functionally, covalently attaches a chromophore to Cys residue(s) of phycobiliproteins. The protein is Chromophore lyase CpcT/CpeT of Synechocystis sp. (strain ATCC 27184 / PCC 6803 / Kazusa).